Consider the following 147-residue polypeptide: Cyanate hydratase (147 aa).

Residues arginine 88, glutamate 91, and serine 114 contribute to the active site.

This sequence belongs to the cyanase family.

The catalysed reaction is cyanate + hydrogencarbonate + 3 H(+) = NH4(+) + 2 CO2. Catalyzes the reaction of cyanate with bicarbonate to produce ammonia and carbon dioxide. This Parasynechococcus marenigrum (strain WH8102) protein is Cyanate hydratase.